The sequence spans 630 residues: Polygalacturonase-1 non-catalytic subunit beta (630 aa).

A signal peptide spans Met1 to Gly27. The propeptide occupies Gly28–Leu108. N-linked (GlcNAc...) asparagine glycosylation is found at Asn124, Asn142, Asn256, Asn334, Asn369, and Asn387. Residues Glu398–Asp630 constitute a propeptide that is removed on maturation. The region spanning Phe415 to Ala629 is the BURP domain.

In terms of assembly, interacts with polygalacturonase-2 (isoenzymes PG2A and PG2B) to form heterodimers called polygalacturonase-1 (PG1). In terms of tissue distribution, mostly expressed in fruit pericarp. Also detected at low levels in cell wall of roots, leaves and flowers (at protein level).

The protein resides in the secreted. It localises to the extracellular space. It is found in the apoplast. The protein localises to the cell wall. In terms of biological role, non-catalytic subunit of the polygalacturonase isozyme 1 (PG1). Necessary and sufficient to convert the polygalacturonase from its monomeric form PG2 to its heterodimeric form PG1. Seems to limit the depolymerization and solubilization of cell wall polyuronides mediated by PG2 during ripening, probably by recruiting PG2 to form PG1. The protein is Polygalacturonase-1 non-catalytic subunit beta (GP1) of Solanum lycopersicum (Tomato).